The sequence spans 122 residues: Probable dihydroneopterin aldolase (122 aa).

Residues E21, Y54, and 73–74 (LE) each bind substrate. K101 functions as the Proton donor/acceptor in the catalytic mechanism.

Belongs to the DHNA family.

The enzyme catalyses 7,8-dihydroneopterin = 6-hydroxymethyl-7,8-dihydropterin + glycolaldehyde. It participates in cofactor biosynthesis; tetrahydrofolate biosynthesis; 2-amino-4-hydroxy-6-hydroxymethyl-7,8-dihydropteridine diphosphate from 7,8-dihydroneopterin triphosphate: step 3/4. In terms of biological role, catalyzes the conversion of 7,8-dihydroneopterin to 6-hydroxymethyl-7,8-dihydropterin. This Chlamydia muridarum (strain MoPn / Nigg) protein is Probable dihydroneopterin aldolase (folB).